A 693-amino-acid chain; its full sequence is tRNA (guanine(27)-N(2))-dimethyltransferase (693 aa).

Positions 95-99 (HKLRR) match the Nucleolar localization signal motif. The C2H2-type zinc finger occupies 144–166 (YHCIICSATITRRTDMLGHVRRH). The region spanning 187–648 (EILKEADTDV…APLMQFKSIL (462 aa)) is the Trm1 methyltransferase domain. The S-adenosyl-L-methionine site is built by R220, D267, D317, and A318. Residues C448, C451, C473, and C475 each contribute to the Zn(2+) site. K545 is covalently cross-linked (Glycyl lysine isopeptide (Lys-Gly) (interchain with G-Cter in SUMO2)). Phosphoserine occurs at positions 572 and 667.

The protein belongs to the class I-like SAM-binding methyltransferase superfamily. Trm1 family.

It is found in the nucleus. The protein resides in the nucleolus. The catalysed reaction is guanosine(27) in tRNA(Tyr) + 2 S-adenosyl-L-methionine = N(2)-dimethylguanosine(27) in tRNA(Tyr) + 2 S-adenosyl-L-homocysteine + 2 H(+). In terms of biological role, specifically dimethylates a single guanine residue at position 27 of tRNA(Tyr) using S-adenosyl-L-methionine as donor of the methyl groups. Dimethylation at position 27 of tRNA(Tyr) is required for efficient translation of tyrosine codons. Also required to maintain 3-(3-amino-3-carboxypropyl)uridine (acp3U) in the D-loop of several cytoplasmic tRNAs. The protein is tRNA (guanine(27)-N(2))-dimethyltransferase (TRMT1L) of Macaca fascicularis (Crab-eating macaque).